We begin with the raw amino-acid sequence, 251 residues long: Triosephosphate isomerase (251 aa).

9-11 (NWK) is a substrate binding site. Residue His-94 is the Electrophile of the active site. Catalysis depends on Glu-166, which acts as the Proton acceptor. Substrate is bound by residues Gly-172, Ser-211, and 232 to 233 (GG).

This sequence belongs to the triosephosphate isomerase family. In terms of assembly, homodimer.

Its subcellular location is the cytoplasm. It carries out the reaction D-glyceraldehyde 3-phosphate = dihydroxyacetone phosphate. It participates in carbohydrate biosynthesis; gluconeogenesis. The protein operates within carbohydrate degradation; glycolysis; D-glyceraldehyde 3-phosphate from glycerone phosphate: step 1/1. Involved in the gluconeogenesis. Catalyzes stereospecifically the conversion of dihydroxyacetone phosphate (DHAP) to D-glyceraldehyde-3-phosphate (G3P). The sequence is that of Triosephosphate isomerase from Xanthomonas campestris pv. campestris (strain 8004).